The following is a 487-amino-acid chain: L-tartrate/succinate antiporter (487 aa).

At 1–9 (MKPSTEWWR) the chain is on the periplasmic side. Residues 10 to 30 (YLAPLAVIAIIALLPVPAGLE) traverse the membrane as a helical segment. Residues 31–32 (NH) are Cytoplasmic-facing. 2 helical membrane passes run 33 to 53 (TWLYFAVFTGVIVGLILEPVP) and 54 to 74 (GAVVAMVGISIIAILSPWLLF). Residues 75-92 (SPEQLAQPGFKFTAKSLS) are Cytoplasmic-facing. The helical transmembrane segment at 93–113 (WAVSGFSNSVIWLIFAAFMFG) threads the bilayer. The Periplasmic portion of the chain corresponds to 114–136 (TGYEKTGLGRRIALILVKKMGHR). The helical transmembrane segment at 137 to 157 (TLFLGYAVMFSELILAPVTPS) threads the bilayer. Residues 158–188 (NSARGAGIIYPIIRNLPPLYQSQPNDSSSRS) are Cytoplasmic-facing. The helical transmembrane segment at 189–209 (IGSYIMWMGIVADCVTSAIFL) threads the bilayer. Over 210–235 (TAMAPNLLLIGLMKSASHATLSWGDW) the chain is Periplasmic. The chain crosses the membrane as a helical span at residues 236-256 (FLGMLPLSILLVLLVPWLAYV). At 257 to 291 (LYPPVLKSGDQVPRWAETELQAMGPLCSREKRMLG) the chain is on the cytoplasmic side. A run of 2 helical transmembrane segments spans residues 292-312 (LMVGALVLWIFGGDYIDAAMV) and 313-333 (GYSVVALMLLLRIISWDDIVS). Residues 334–339 (NKAAWN) are Cytoplasmic-facing. Residues 340–360 (VFFWLASLITLATGLNNTGFI) traverse the membrane as a helical segment. The Periplasmic segment spans residues 361-369 (SWFGKLLAG). A helical transmembrane segment spans residues 370-390 (SLSGYSPTMVMVALIVVFYLL). Residues 391 to 392 (RY) lie on the Cytoplasmic side of the membrane. A helical transmembrane segment spans residues 393–413 (FFASATAYTSALAPMMIAAAL). The Periplasmic portion of the chain corresponds to 414 to 417 (AMPE). Residues 418 to 438 (IPLPVFCLMVGAAIGLGSILT) form a helical membrane-spanning segment. The Cytoplasmic segment spans residues 439-464 (PYATGPSPIYYGSGYLPTADYWRLGA). The chain crosses the membrane as a helical span at residues 465–485 (IFGLIFLVLLVITGLLWMPVV). At 486-487 (LL) the chain is on the periplasmic side.

This sequence belongs to the SLC13A/DASS transporter (TC 2.A.47) family. DIT1 subfamily.

Its subcellular location is the cell inner membrane. The enzyme catalyses (2R,3R)-tartrate(out) + succinate(in) = (2R,3R)-tartrate(in) + succinate(out). Its function is as follows. Catalyzes the uptake of tartrate in exchange for intracellular succinate. Essential for anaerobic L-tartrate fermentation. The protein is L-tartrate/succinate antiporter of Escherichia coli (strain K12).